Here is a 155-residue protein sequence, read N- to C-terminus: Ribosomal RNA large subunit methyltransferase H (155 aa).

S-adenosyl-L-methionine is bound by residues Leu-73, Gly-104, and 123-128; that span reads LSPLTL.

Belongs to the RNA methyltransferase RlmH family. Homodimer.

Its subcellular location is the cytoplasm. It carries out the reaction pseudouridine(1915) in 23S rRNA + S-adenosyl-L-methionine = N(3)-methylpseudouridine(1915) in 23S rRNA + S-adenosyl-L-homocysteine + H(+). Functionally, specifically methylates the pseudouridine at position 1915 (m3Psi1915) in 23S rRNA. The polypeptide is Ribosomal RNA large subunit methyltransferase H (Stutzerimonas stutzeri (strain A1501) (Pseudomonas stutzeri)).